Here is a 118-residue protein sequence, read N- to C-terminus: Small ribosomal subunit protein uS13 (118 aa).

Residues 94–118 are disordered; that stretch reads SLPVRGQRTKTNARTRKGPRKPIKK.

Belongs to the universal ribosomal protein uS13 family. In terms of assembly, part of the 30S ribosomal subunit. Forms a loose heterodimer with protein S19. Forms two bridges to the 50S subunit in the 70S ribosome.

Functionally, located at the top of the head of the 30S subunit, it contacts several helices of the 16S rRNA. In the 70S ribosome it contacts the 23S rRNA (bridge B1a) and protein L5 of the 50S subunit (bridge B1b), connecting the 2 subunits; these bridges are implicated in subunit movement. Contacts the tRNAs in the A and P-sites. This chain is Small ribosomal subunit protein uS13, found in Actinobacillus pleuropneumoniae serotype 5b (strain L20).